The chain runs to 124 residues: MSIETLVEEIGKLTLTEASELVKALEEKFGVSAAPVAVAGVAAAAAGDAPVVEEQTEFDVVLTAAGESKINVIKAVRAITGLGLKEAKDLVDGAPKTVKEAISKDEAEKIAKELKDAGASVEVK.

It belongs to the bacterial ribosomal protein bL12 family. Homodimer. Part of the ribosomal stalk of the 50S ribosomal subunit. Forms a multimeric L10(L12)X complex, where L10 forms an elongated spine to which 2 to 4 L12 dimers bind in a sequential fashion. Binds GTP-bound translation factors.

In terms of biological role, forms part of the ribosomal stalk which helps the ribosome interact with GTP-bound translation factors. Is thus essential for accurate translation. This Pelodictyon phaeoclathratiforme (strain DSM 5477 / BU-1) protein is Large ribosomal subunit protein bL12.